Reading from the N-terminus, the 353-residue chain is Holliday junction branch migration complex subunit RuvB (353 aa).

The tract at residues 1–25 (MDPGPAGDEVSLAPQQETAEQDVET) is disordered. Positions 1 to 188 (MDPGPAGDEV…FGFTAHMEFY (188 aa)) are large ATPase domain (RuvB-L). Residues Leu-27, Arg-28, Gly-69, Lys-72, Thr-73, Ser-74, 135-137 (EDY), Arg-178, Tyr-188, and Arg-225 each bind ATP. Mg(2+) is bound at residue Thr-73. The tract at residues 189 to 259 (EPAELELVVR…VARAALEVYD (71 aa)) is small ATPAse domain (RuvB-S). The head domain (RuvB-H) stretch occupies residues 262 to 353 (EHGLDRLDRA…ATRSLFADEV (92 aa)). DNA is bound by residues Arg-317 and Arg-322.

It belongs to the RuvB family. Homohexamer. Forms an RuvA(8)-RuvB(12)-Holliday junction (HJ) complex. HJ DNA is sandwiched between 2 RuvA tetramers; dsDNA enters through RuvA and exits via RuvB. An RuvB hexamer assembles on each DNA strand where it exits the tetramer. Each RuvB hexamer is contacted by two RuvA subunits (via domain III) on 2 adjacent RuvB subunits; this complex drives branch migration. In the full resolvosome a probable DNA-RuvA(4)-RuvB(12)-RuvC(2) complex forms which resolves the HJ.

The protein resides in the cytoplasm. It carries out the reaction ATP + H2O = ADP + phosphate + H(+). The RuvA-RuvB-RuvC complex processes Holliday junction (HJ) DNA during genetic recombination and DNA repair, while the RuvA-RuvB complex plays an important role in the rescue of blocked DNA replication forks via replication fork reversal (RFR). RuvA specifically binds to HJ cruciform DNA, conferring on it an open structure. The RuvB hexamer acts as an ATP-dependent pump, pulling dsDNA into and through the RuvAB complex. RuvB forms 2 homohexamers on either side of HJ DNA bound by 1 or 2 RuvA tetramers; 4 subunits per hexamer contact DNA at a time. Coordinated motions by a converter formed by DNA-disengaged RuvB subunits stimulates ATP hydrolysis and nucleotide exchange. Immobilization of the converter enables RuvB to convert the ATP-contained energy into a lever motion, pulling 2 nucleotides of DNA out of the RuvA tetramer per ATP hydrolyzed, thus driving DNA branch migration. The RuvB motors rotate together with the DNA substrate, which together with the progressing nucleotide cycle form the mechanistic basis for DNA recombination by continuous HJ branch migration. Branch migration allows RuvC to scan DNA until it finds its consensus sequence, where it cleaves and resolves cruciform DNA. In Saccharopolyspora erythraea (strain ATCC 11635 / DSM 40517 / JCM 4748 / NBRC 13426 / NCIMB 8594 / NRRL 2338), this protein is Holliday junction branch migration complex subunit RuvB.